Here is a 711-residue protein sequence, read N- to C-terminus: Polyribonucleotide nucleotidyltransferase (711 aa).

Asp487 and Asp493 together coordinate Mg(2+). In terms of domain architecture, KH spans 554–613 (PRIHTMKISAEKIKDVIGKGGAVIRALTEETGTTIEIEDDGTIKIAATEGAAAKEAIRRI). The 69-residue stretch at 623-691 (GRIYTGKVAR…RQGRVRLSMK (69 aa)) folds into the S1 motif domain. The interval 691–711 (KEAVEKPAEEAAAEAPAAKEE) is disordered.

The protein belongs to the polyribonucleotide nucleotidyltransferase family. In terms of assembly, component of the RNA degradosome, which is a multiprotein complex involved in RNA processing and mRNA degradation. Requires Mg(2+) as cofactor.

Its subcellular location is the cytoplasm. It carries out the reaction RNA(n+1) + phosphate = RNA(n) + a ribonucleoside 5'-diphosphate. In terms of biological role, involved in mRNA degradation. Catalyzes the phosphorolysis of single-stranded polyribonucleotides processively in the 3'- to 5'-direction. This chain is Polyribonucleotide nucleotidyltransferase, found in Vibrio parahaemolyticus serotype O3:K6 (strain RIMD 2210633).